The primary structure comprises 213 residues: MRSKYIVIEGLEGAGKTTARNVVVETLEQLGIRDMVFTREPGGTQLAEKLRSLVLDIKSVGDEVITDKAEVLMFYAARVQLVETVIKPALANGTWVIGDRHDLSTQAYQGGGRGIDQHMLATLRDAVLGDFRPDLTLYLDVTPEVGLKRARARGELDRIEQESFDFFNRTRARYLELAAQDKSIHTIDATQPLESVMDAIRTTVTNWVKELDA.

Gly-10 to Thr-17 provides a ligand contact to ATP.

This sequence belongs to the thymidylate kinase family.

It carries out the reaction dTMP + ATP = dTDP + ADP. Its function is as follows. Phosphorylation of dTMP to form dTDP in both de novo and salvage pathways of dTTP synthesis. This chain is Thymidylate kinase, found in Escherichia coli O7:K1 (strain IAI39 / ExPEC).